An 87-amino-acid polypeptide reads, in one-letter code: Large ribosomal subunit protein bL31B (87 aa).

The protein belongs to the bacterial ribosomal protein bL31 family. Type B subfamily. As to quaternary structure, part of the 50S ribosomal subunit.

The polypeptide is Large ribosomal subunit protein bL31B (Staphylococcus carnosus (strain TM300)).